The primary structure comprises 191 residues: dCTP deaminase, dUMP-forming (191 aa).

Residues 101-106 (KSSLGR), Asp119, 127-129 (TLE), Gln148, Tyr162, and Gln174 each bind dCTP. Residue Glu129 is the Proton donor/acceptor of the active site. A disordered region spans residues 163–191 (GSAKYGSRYQGQRGPTPSRSYQNFHRTPI). Polar residues predominate over residues 171-191 (YQGQRGPTPSRSYQNFHRTPI).

Belongs to the dCTP deaminase family. As to quaternary structure, homotrimer.

The catalysed reaction is dCTP + 2 H2O = dUMP + NH4(+) + diphosphate. It functions in the pathway pyrimidine metabolism; dUMP biosynthesis; dUMP from dCTP: step 1/1. In terms of biological role, bifunctional enzyme that catalyzes both the deamination of dCTP to dUTP and the hydrolysis of dUTP to dUMP without releasing the toxic dUTP intermediate. The sequence is that of dCTP deaminase, dUMP-forming from Nocardioides sp. (strain ATCC BAA-499 / JS614).